The primary structure comprises 365 residues: Histidinol-phosphate aminotransferase (365 aa).

The residue at position 221 (Lys221) is an N6-(pyridoxal phosphate)lysine.

It belongs to the class-II pyridoxal-phosphate-dependent aminotransferase family. Histidinol-phosphate aminotransferase subfamily. In terms of assembly, homodimer. Pyridoxal 5'-phosphate is required as a cofactor.

It carries out the reaction L-histidinol phosphate + 2-oxoglutarate = 3-(imidazol-4-yl)-2-oxopropyl phosphate + L-glutamate. It participates in amino-acid biosynthesis; L-histidine biosynthesis; L-histidine from 5-phospho-alpha-D-ribose 1-diphosphate: step 7/9. The protein is Histidinol-phosphate aminotransferase of Rhodopseudomonas palustris (strain HaA2).